The sequence spans 438 residues: Elongation factor 1-alpha (438 aa).

A tr-type G domain is found at 5–228 (KPHLNLVVIG…ALDSLEPPPK (224 aa)). Residues 14–21 (GHVDHGKS) are G1. Residue 14-21 (GHVDHGKS) coordinates GTP. A Mg(2+)-binding site is contributed by S21. Residues 70–74 (GVTIA) form a G2 region. Residues 91–94 (DAPG) are G3. Residues 91-95 (DAPGH) and 153-156 (NKMD) contribute to the GTP site. Residues 153–156 (NKMD) form a G4 region. The interval 194-196 (SAW) is G5.

This sequence belongs to the TRAFAC class translation factor GTPase superfamily. Classic translation factor GTPase family. EF-Tu/EF-1A subfamily.

The protein localises to the cytoplasm. The catalysed reaction is GTP + H2O = GDP + phosphate + H(+). In terms of biological role, GTP hydrolase that promotes the GTP-dependent binding of aminoacyl-tRNA to the A-site of ribosomes during protein biosynthesis. This Staphylothermus marinus (strain ATCC 43588 / DSM 3639 / JCM 9404 / F1) protein is Elongation factor 1-alpha.